Here is a 263-residue protein sequence, read N- to C-terminus: Phosphate import ATP-binding protein PstB (263 aa).

Residues 17–258 (ISVKNLDFFY…PKRKETEDYI (242 aa)) form the ABC transporter domain. 49–56 (GPSGCGKS) contacts ATP.

Belongs to the ABC transporter superfamily. Phosphate importer (TC 3.A.1.7) family. In terms of assembly, the complex is composed of two ATP-binding proteins (PstB), two transmembrane proteins (PstC and PstA) and a solute-binding protein (PstS).

The protein localises to the cell inner membrane. The catalysed reaction is phosphate(out) + ATP + H2O = ADP + 2 phosphate(in) + H(+). In terms of biological role, part of the ABC transporter complex PstSACB involved in phosphate import. Responsible for energy coupling to the transport system. The sequence is that of Phosphate import ATP-binding protein PstB from Polaromonas sp. (strain JS666 / ATCC BAA-500).